The chain runs to 233 residues: Phosphoenolpyruvate guanylyltransferase 1 (233 aa).

Positions 154, 171, and 174 each coordinate phosphoenolpyruvate.

It belongs to the CofC family.

The enzyme catalyses phosphoenolpyruvate + GTP + H(+) = enolpyruvoyl-2-diphospho-5'-guanosine + diphosphate. It participates in cofactor biosynthesis; coenzyme F420 biosynthesis. Guanylyltransferase that catalyzes the activation of phosphoenolpyruvate (PEP) as enolpyruvoyl-2-diphospho-5'-guanosine, via the condensation of PEP with GTP. It is involved in the biosynthesis of coenzyme F420, a hydride carrier cofactor. The sequence is that of Phosphoenolpyruvate guanylyltransferase 1 from Rhodococcus jostii (strain RHA1).